A 1051-amino-acid polypeptide reads, in one-letter code: Helicase POLQ-like (1051 aa).

The span at 1–10 shows a compositional bias: basic residues; the sequence is MANKHNLCKK. Disordered regions lie at residues 1–28 and 61–112; these read MANKHNLCKKRSLDLSEESTSESHAKRQ and LFGT…APTD. Polar residues-rich tracts occupy residues 64 to 78 and 89 to 102; these read TQATTSTNKMTQSGS and SFPSAQSVPPNSAS. Residues 103 to 112 show a composition bias toward basic and acidic residues; that stretch reads KPDEASAPTD. Positions 274–446 constitute a Helicase ATP-binding domain; it reads LPAIRQRKNL…FLNADVYTRG (173 aa). 287–294 provides a ligand contact to ATP; it reads LPTSGGKT. The DEAH box signature appears at 391 to 394; it reads DELH. In terms of domain architecture, Helicase C-terminal spans 497–689; it reads HLAGLISECA…NEAVGLQSLI (193 aa).

It belongs to the helicase family. SKI2 subfamily.

It is found in the nucleus. The protein resides in the chromosome. It carries out the reaction Couples ATP hydrolysis with the unwinding of duplex DNA by translocating in the 3'-5' direction.. It catalyses the reaction ATP + H2O = ADP + phosphate + H(+). Functionally, single-stranded 3'-5' DNA helicase that plays a key role in homology-driven double-strand break (DSB) repair. Involved in different DSB repair mechanisms that are guided by annealing of extensive stretches of complementary bases at break ends, such as microhomology-mediated end-joining (MMEJ), single-strand annealing (SSA) or synthesis-dependent strand annealing (SDSA). The polypeptide is Helicase POLQ-like (Drosophila melanogaster (Fruit fly)).